Reading from the N-terminus, the 108-residue chain is Nucleoid-associated protein Lcho_1975 (108 aa).

This sequence belongs to the YbaB/EbfC family. Homodimer.

It localises to the cytoplasm. It is found in the nucleoid. In terms of biological role, binds to DNA and alters its conformation. May be involved in regulation of gene expression, nucleoid organization and DNA protection. The protein is Nucleoid-associated protein Lcho_1975 of Leptothrix cholodnii (strain ATCC 51168 / LMG 8142 / SP-6) (Leptothrix discophora (strain SP-6)).